A 695-amino-acid polypeptide reads, in one-letter code: MLSAPSSSTTPASPPTSPPNTTSSDDFAVLKEPKVEAILNSELGLAILNDRIKDYLLTCKELAGFFKKRSILEEESGKNLQKLAKSYLETFQSKHHSPQSFSASVITSMEIHEQLANHSLTLQKTLSAFSDQVIEFHKNAERKRKSIKEYAKKQENAYLEAVMQMDKSKSRFKGAETEYNRALDNKNTGDSQKKVGFFKPKSNAQLTKLEDEARLKAENAESDMHSKIENAQNVQKQLLCIHRPNYIKQFFSLQREIESSLIANYLRYTKLCESNTLLNGLTIRPQKPTPTNCGLQHALDNINANTDFVQYVLHASIKHEDNKNPTDASKTKIIQPPSSYGTGSSAGKTNPPVNPTIKVTAAIPSPLQNTNPAPSTFPNPSVASPAFPNSSTSNPSTAPASASPLASTLKPSTANDTNGSSSSSSSNPRTSSPLASNAENKPPVAQQSPPVLLPTLPPIQTTTIQTSREVAPPPSSINSNRAASPFRPTSVSPQPSSPTKSLLFGARLDAIILREHSNIPNIVMQCTSQVENFGLNLQGIYRVPSSSARVNMLRSQFENNPLLQLHTPEDYENDVHAVADLLKIFFRELREPLIPDNHQRDFIDAGNVEDESRRRDAVHRAINDLPDANYSTIRHLTIHLAKIKENSDVNKMSTNNLAIIWGPTIIKQATIPEISSFSRTIEILIDYCFTIFDYD.

Over residues 1 to 11 the composition is skewed to low complexity; sequence MLSAPSSSTTP. The tract at residues 1 to 26 is disordered; sequence MLSAPSSSTTPASPPTSPPNTTSSDD. Residues 33–307 enclose the F-BAR domain; the sequence is PKVEAILNSE…ALDNINANTD (275 aa). Positions 320 to 499 are disordered; that stretch reads EDNKNPTDAS…SVSPQPSSPT (180 aa). Polar residues-rich tracts occupy residues 336 to 348 and 366 to 382; these read PPSSYGTGSSAGK and PLQNTNPAPSTFPNPSV. Low complexity-rich tracts occupy residues 383 to 432, 458 to 467, and 488 to 499; these read ASPA…RTSS, PIQTTTIQTS, and PTSVSPQPSSPT. 2 positions are modified to phosphoserine: Ser496 and Ser497. In terms of domain architecture, Rho-GAP spans 506 to 692; that stretch reads ARLDAIILRE…ILIDYCFTIF (187 aa).

This chain is Probable Rho-GTPase-activating protein 7 (rga7), found in Schizosaccharomyces pombe (strain 972 / ATCC 24843) (Fission yeast).